A 223-amino-acid chain; its full sequence is UPF0441 protein YgiB (223 aa).

Residues 178 to 195 (TVPKTAMAPKPATTTTVT) are compositionally biased toward low complexity. The interval 178–223 (TVPKTAMAPKPATTTTVTRGGFGESVAKQSTMQRSATGTSSRSMGG) is disordered. Residues 204-223 (AKQSTMQRSATGTSSRSMGG) are compositionally biased toward polar residues.

Belongs to the UPF0441 family.

The protein is UPF0441 protein YgiB of Shigella boydii serotype 18 (strain CDC 3083-94 / BS512).